Consider the following 291-residue polypeptide: Kidney mitochondrial carrier protein 1 (291 aa).

Solcar repeat units lie at residues 7-96, 104-189, and 198-289; these read KPFI…LKRL, ETLV…TKKH, and DTVY…LKKL. Helical transmembrane passes span 9-26, 71-89, 106-124, 164-183, 204-224, and 264-283; these read FIYG…TFPI, GIAP…KIGT, LVLN…SCIA, GVSL…LPVY, FLSS…VDVV, and GFWP…FITY.

The protein belongs to the mitochondrial carrier (TC 2.A.29) family.

Its subcellular location is the mitochondrion inner membrane. It carries out the reaction sulfite(in) + sulfate(out) = sulfite(out) + sulfate(in). The enzyme catalyses thiosulfate(in) + sulfate(out) = thiosulfate(out) + sulfate(in). It catalyses the reaction sulfate(out) + phosphate(in) = sulfate(in) + phosphate(out). The catalysed reaction is oxalate(in) + sulfate(out) = oxalate(out) + sulfate(in). It carries out the reaction malonate(in) + sulfate(out) = malonate(out) + sulfate(in). The enzyme catalyses maleate(in) + sulfate(out) = maleate(out) + sulfate(in). It catalyses the reaction (S)-malate(in) + sulfate(out) = (S)-malate(out) + sulfate(in). The catalysed reaction is (3S)-citramalate(in) + sulfate(out) = (3S)-citramalate(out) + sulfate(in). It carries out the reaction (3R)-citramalate(in) + sulfate(out) = (3R)-citramalate(out) + sulfate(in). The enzyme catalyses sulfate(out) + succinate(in) = sulfate(in) + succinate(out). It catalyses the reaction (S,S)-tartrate(in) + sulfate(out) = (S,S)-tartrate(out) + sulfate(in). The catalysed reaction is (2R,3R)-tartrate(in) + sulfate(out) = (2R,3R)-tartrate(out) + sulfate(in). It carries out the reaction D-aspartate(in) + sulfate(out) = D-aspartate(out) + sulfate(in). The enzyme catalyses L-aspartate(in) + sulfate(out) = L-aspartate(out) + sulfate(in). It catalyses the reaction sulfate(in) = sulfate(out). The catalysed reaction is phosphate(in) = phosphate(out). It carries out the reaction (S)-malate(out) = (S)-malate(in). In terms of biological role, probable transporter. Its function is as follows. Antiporter that transports inorganic anions (sulfate, sulfite, thiosulfate and phosphate) and, to a lesser extent, a variety of dicarboxylates (e.g. malonate, malate and citramalate) and, even more so, aspartate. The sulfate/sulfate exchange is much higher than the phosphate/phosphate and malate/malate exchanges. The transport affinities is higher for sulfate and thiosulfate than for any other substrate. May catalyze the export of sulfite and thiosulfate (the hydrogen sulfide degradation products) from the mitochondria, thereby modulating the level of the hydrogen sulfide. Also may mediate a very low unidirectional transport of sulfate, phosphate and (S)-malate. This chain is Kidney mitochondrial carrier protein 1, found in Xenopus laevis (African clawed frog).